We begin with the raw amino-acid sequence, 351 residues long: Dihydroorotate dehydrogenase (quinone) (351 aa).

FMN contacts are provided by residues 67-71 (AGFDK) and Thr91. Lys71 serves as a coordination point for substrate. 116-120 (NAMGF) contributes to the substrate binding site. FMN contacts are provided by Asn145 and Asn178. Asn178 contributes to the substrate binding site. Residue Ser181 is the Nucleophile of the active site. Asn183 contacts substrate. Positions 214 and 242 each coordinate FMN. 243–244 (NT) provides a ligand contact to substrate. Residues Gly262, Gly291, and 312–313 (YS) each bind FMN.

It belongs to the dihydroorotate dehydrogenase family. Type 2 subfamily. Monomer. Requires FMN as cofactor.

It is found in the cell membrane. It carries out the reaction (S)-dihydroorotate + a quinone = orotate + a quinol. It functions in the pathway pyrimidine metabolism; UMP biosynthesis via de novo pathway; orotate from (S)-dihydroorotate (quinone route): step 1/1. Functionally, catalyzes the conversion of dihydroorotate to orotate with quinone as electron acceptor. This Helicobacter pylori (strain P12) protein is Dihydroorotate dehydrogenase (quinone).